The sequence spans 147 residues: Mannitol-specific cryptic phosphotransferase enzyme IIA component (147 aa).

One can recognise a PTS EIIA type-2 domain in the interval 5-147; that stretch reads DYFPESSISV…KQLADIISRG (143 aa). His-67 serves as the catalytic Tele-phosphohistidine intermediate. Phosphohistidine; by HPr is present on His-67.

The protein localises to the cytoplasm. Functionally, the phosphoenolpyruvate-dependent sugar phosphotransferase system (sugar PTS), a major carbohydrate active transport system, catalyzes the phosphorylation of incoming sugar substrates concomitantly with their translocation across the cell membrane. The enzyme II CmtAB PTS system is involved in D-mannitol transport. The polypeptide is Mannitol-specific cryptic phosphotransferase enzyme IIA component (cmtB) (Escherichia coli O157:H7).